A 57-amino-acid chain; its full sequence is ATPAYMSITGTKQGLITAGAFTADSVGNTYQEGFEDQVMVQGFDPAVIIPTGPVYGQ.

This sequence belongs to the hcp1 family. Homodimer.

It localises to the secreted. This chain is Major exported protein, found in Pseudomonas syringae pv. ribicola.